The chain runs to 193 residues: Putative RING finger protein ORF38 (193 aa).

The RING-type zinc finger occupies 12–50 (CCICLDDEDVDRDNTIPCRHTVCRTCYVKPMLDQCPVCR).

The protein is Putative RING finger protein ORF38 of Magallana gigas (Pacific oyster).